Consider the following 282-residue polypeptide: Formamidopyrimidine-DNA glycosylase (282 aa).

Catalysis depends on proline 2, which acts as the Schiff-base intermediate with DNA. Glutamate 3 (proton donor) is an active-site residue. The Proton donor; for beta-elimination activity role is filled by lysine 61. DNA contacts are provided by histidine 93, arginine 112, and lysine 158. Residues 244-278 (DAYGREGEPCRRCGAIMRRDKFMNRSSFYCPRCQP) form an FPG-type zinc finger. The active-site Proton donor; for delta-elimination activity is arginine 268.

It belongs to the FPG family. In terms of assembly, monomer. Requires Zn(2+) as cofactor.

It catalyses the reaction Hydrolysis of DNA containing ring-opened 7-methylguanine residues, releasing 2,6-diamino-4-hydroxy-5-(N-methyl)formamidopyrimidine.. The enzyme catalyses 2'-deoxyribonucleotide-(2'-deoxyribose 5'-phosphate)-2'-deoxyribonucleotide-DNA = a 3'-end 2'-deoxyribonucleotide-(2,3-dehydro-2,3-deoxyribose 5'-phosphate)-DNA + a 5'-end 5'-phospho-2'-deoxyribonucleoside-DNA + H(+). In terms of biological role, involved in base excision repair of DNA damaged by oxidation or by mutagenic agents. Acts as a DNA glycosylase that recognizes and removes damaged bases. Has a preference for oxidized purines, such as 7,8-dihydro-8-oxoguanine (8-oxoG). Has AP (apurinic/apyrimidinic) lyase activity and introduces nicks in the DNA strand. Cleaves the DNA backbone by beta-delta elimination to generate a single-strand break at the site of the removed base with both 3'- and 5'-phosphates. This Mycolicibacterium gilvum (strain PYR-GCK) (Mycobacterium gilvum (strain PYR-GCK)) protein is Formamidopyrimidine-DNA glycosylase.